Here is a 413-residue protein sequence, read N- to C-terminus: uncharacterized protein (413 aa).

The residue at position 265 (Lys-265) is an N6-(pyridoxal phosphate)lysine.

This sequence belongs to the threonine aldolase family. Pyridoxal 5'-phosphate is required as a cofactor.

This is an uncharacterized protein from Caenorhabditis elegans.